We begin with the raw amino-acid sequence, 507 residues long: Proline--tRNA ligase (507 aa).

Belongs to the class-II aminoacyl-tRNA synthetase family. ProS type 3 subfamily. As to quaternary structure, homodimer.

It localises to the cytoplasm. The catalysed reaction is tRNA(Pro) + L-proline + ATP = L-prolyl-tRNA(Pro) + AMP + diphosphate. In terms of biological role, catalyzes the attachment of proline to tRNA(Pro) in a two-step reaction: proline is first activated by ATP to form Pro-AMP and then transferred to the acceptor end of tRNA(Pro). The chain is Proline--tRNA ligase from Protochlamydia amoebophila (strain UWE25).